We begin with the raw amino-acid sequence, 626 residues long: Polygalacturonase 1 beta-like protein 3 (626 aa).

Positions 1 to 23 (MLKQFLLLQSFSFFLFNVVIVGG) are cleaved as a signal peptide. The stretch at 117-120 (FSVY) is one FXXY 1 repeat. An N-linked (GlcNAc...) asparagine glycan is attached at N124. FXXY repeat units lie at residues 125–128 (FTNY), 139–142 (FKNY), 153–156 (FRRY), 167–170 (FTVY), 181–184 (FNSY), 195–198 (FTNY), 209–212 (FTAY), 223–226 (FKTY), 238–241 (FTSY), 252–255 (FTSY), and 266–269 (FSNY). Residue N141 is glycosylated (N-linked (GlcNAc...) asparagine). N-linked (GlcNAc...) asparagine glycosylation occurs at N277. FXXY repeat units follow at residues 280-283 (FTSY), 294-297 (FNNY), 308-311 (FANY), 322-325 (FSSY), 336-339 (FVNY), 350-353 (FTGY), and 364-367 (FKTY). N370 is a glycosylation site (N-linked (GlcNAc...) asparagine). FXXY repeat units lie at residues 373 to 376 (FKDY) and 383 to 386 (FAKY). N-linked (GlcNAc...) asparagine glycosylation is found at N387 and N465. The 215-residue stretch at 411-625 (FFRESSLKEG…FENDMNWAIA (215 aa)) folds into the BURP domain.

In terms of tissue distribution, expressed in flowers and stems. Detected in trichomes, guard cells, root vascular tissue, root hairs, pollen sacs, sepals and styles of pistils.

The protein localises to the secreted. It localises to the extracellular space. It is found in the apoplast. The protein resides in the cell wall. Involved in cell size determination. May serve as a chaperone for expansins through the secretory pathway. The polypeptide is Polygalacturonase 1 beta-like protein 3 (Arabidopsis thaliana (Mouse-ear cress)).